The following is a 437-amino-acid chain: MAAPRRYFPGIVRALLGAWQVGSHAGREWVSPPGSLLGNHVRCVSCVVGATFSGPLLASASSRYGQDSALDRILGFPQPDSSLVPCVPAVSVHRDEQNLLLVHTPDMPENPRVLRVVLLGAPNAGKSTLSNQLLGRKVFPVSKKVHTTRCQALGVITEKETQVILLDTPGIISPVKQKRHHLELSLLEDPWKSMESADLVVVLVDVSDKWTRSRLSPQVLQCLTKFSQVPSILVLNKVDCLKQKSVLLELTAALTEGVVNGKMLNVRQAFRSRPSTHCPGPETEDPNTHAVRSPQRTGWPYFQEIFMLSALNNKDVNTLKQYLLTQAQPGPWEFHSGVLTSQTPEEICANKIREKLLEYLPEEVPYSVQQKTVIWEEGPSGELVIQQNLLVPKESHVRILIGQKGLLISQIAQEVSQDLMDIFLCDVLLRLSVKLLK.

The transit peptide at 1–20 directs the protein to the mitochondrion; it reads MAAPRRYFPGIVRALLGAWQ. An Era-type G domain is found at 112–330; that stretch reads RVLRVVLLGA…QYLLTQAQPG (219 aa). The interval 120-127 is G1; it reads GAPNAGKS. Position 120-127 (120-127) interacts with GTP; that stretch reads GAPNAGKS. A G2 region spans residues 146–150; the sequence is HTTRC. Residues 167–170 form a G3 region; sequence DTPG. 167–171 contacts GTP; the sequence is DTPGI. Ser173 bears the Phosphoserine mark. Position 236–239 (236–239) interacts with GTP; it reads NKVD. Residues 236–239 are G4; the sequence is NKVD. Residues 272-293 are disordered; that stretch reads SRPSTHCPGPETEDPNTHAVRS. The tract at residues 308 to 310 is G5; it reads LSA. The KH type-2 domain occupies 360–437; sequence LPEEVPYSVQ…LLRLSVKLLK (78 aa).

It belongs to the TRAFAC class TrmE-Era-EngA-EngB-Septin-like GTPase superfamily. Era GTPase family.

Its subcellular location is the mitochondrion matrix. The protein localises to the mitochondrion inner membrane. In terms of biological role, probable GTPase that plays a role in the mitochondrial ribosomal small subunit assembly. Specifically binds the 12S mitochondrial rRNA (12S mt-rRNA) to a 33 nucleotide section delineating the 3' terminal stem-loop region. May act as a chaperone that protects the 12S mt-rRNA on the 28S mitoribosomal subunit during ribosomal small subunit assembly. The polypeptide is GTPase Era, mitochondrial (Eral1) (Rattus norvegicus (Rat)).